A 388-amino-acid polypeptide reads, in one-letter code: Formate-dependent phosphoribosylglycinamide formyltransferase (388 aa).

N(1)-(5-phospho-beta-D-ribosyl)glycinamide contacts are provided by residues Glu-15–Leu-16 and Glu-75. ATP-binding positions include Arg-107, Lys-148, Ser-153–Gln-158, Glu-188–Leu-191, and Glu-196. The ATP-grasp domain occupies Asp-112–Leu-302. Mg(2+) contacts are provided by Glu-261 and Glu-273. N(1)-(5-phospho-beta-D-ribosyl)glycinamide is bound by residues Asp-280, Lys-350, and Arg-357–Arg-358.

The protein belongs to the PurK/PurT family. Homodimer.

The catalysed reaction is N(1)-(5-phospho-beta-D-ribosyl)glycinamide + formate + ATP = N(2)-formyl-N(1)-(5-phospho-beta-D-ribosyl)glycinamide + ADP + phosphate + H(+). It participates in purine metabolism; IMP biosynthesis via de novo pathway; N(2)-formyl-N(1)-(5-phospho-D-ribosyl)glycinamide from N(1)-(5-phospho-D-ribosyl)glycinamide (formate route): step 1/1. In terms of biological role, involved in the de novo purine biosynthesis. Catalyzes the transfer of formate to 5-phospho-ribosyl-glycinamide (GAR), producing 5-phospho-ribosyl-N-formylglycinamide (FGAR). Formate is provided by PurU via hydrolysis of 10-formyl-tetrahydrofolate. The polypeptide is Formate-dependent phosphoribosylglycinamide formyltransferase (Prochlorococcus marinus (strain MIT 9313)).